A 219-amino-acid polypeptide reads, in one-letter code: Proteasome subunit beta (219 aa).

A propeptide spans 1–14 (MISGSEYHKEYMKG) (removed in mature form; by autocatalysis). The Nucleophile role is filled by T15.

The protein belongs to the peptidase T1B family. In terms of assembly, the 20S proteasome core is composed of 14 alpha and 14 beta subunits that assemble into four stacked heptameric rings, resulting in a barrel-shaped structure. The two inner rings, each composed of seven catalytic beta subunits, are sandwiched by two outer rings, each composed of seven alpha subunits. The catalytic chamber with the active sites is on the inside of the barrel. Has a gated structure, the ends of the cylinder being occluded by the N-termini of the alpha-subunits. Is capped at one or both ends by the proteasome regulatory ATPase, PAN.

Its subcellular location is the cytoplasm. The catalysed reaction is Cleavage of peptide bonds with very broad specificity.. With respect to regulation, the formation of the proteasomal ATPase PAN-20S proteasome complex, via the docking of the C-termini of PAN into the intersubunit pockets in the alpha-rings, triggers opening of the gate for substrate entry. Interconversion between the open-gate and close-gate conformations leads to a dynamic regulation of the 20S proteasome proteolysis activity. In terms of biological role, component of the proteasome core, a large protease complex with broad specificity involved in protein degradation. This Methanococcus vannielii (strain ATCC 35089 / DSM 1224 / JCM 13029 / OCM 148 / SB) protein is Proteasome subunit beta.